Reading from the N-terminus, the 78-residue chain is DNA-directed RNA polymerase subunit omega (78 aa).

It belongs to the RNA polymerase subunit omega family. The RNAP catalytic core consists of 2 alpha, 1 beta, 1 beta' and 1 omega subunit. When a sigma factor is associated with the core the holoenzyme is formed, which can initiate transcription.

It catalyses the reaction RNA(n) + a ribonucleoside 5'-triphosphate = RNA(n+1) + diphosphate. In terms of biological role, promotes RNA polymerase assembly. Latches the N- and C-terminal regions of the beta' subunit thereby facilitating its interaction with the beta and alpha subunits. The protein is DNA-directed RNA polymerase subunit omega of Desulfovibrio desulfuricans (strain ATCC 27774 / DSM 6949 / MB).